A 240-amino-acid chain; its full sequence is Insulin-like growth factor-binding protein 3 receptor (240 aa).

An N-terminal signal peptide occupies residues 1–38 (MGNCQAGHNLHLCLAHHPPLVCATLILLLLGLSGLGLG). The Extracellular segment spans residues 39 to 204 (SFLLTHRTGL…SEELALCGSR (166 aa)). N-linked (GlcNAc...) asparagine glycans are attached at residues asparagine 73, asparagine 101, and asparagine 167. Residues 205-225 (LLVLGSFLLLFCGLLCCVTAM) traverse the membrane as a helical segment. The Cytoplasmic portion of the chain corresponds to 226–240 (CFHPRRESHWSRTRL).

In terms of assembly, interacts with IGFBP3. Interacts with CASP8. Widely expressed in normal tissues but suppressed in prostate and breast tumor.

Its subcellular location is the cell membrane. Its function is as follows. Cell death receptor specific for IGFBP3, may mediate caspase-8-dependent apoptosis upon ligand binding. The chain is Insulin-like growth factor-binding protein 3 receptor (TMEM219) from Homo sapiens (Human).